A 34-amino-acid chain; its full sequence is Antimicrobial peptide Alo-2 (34 aa).

Cystine bridges form between cysteine 1/cysteine 18, cysteine 8/cysteine 22, and cysteine 17/cysteine 33.

It is found in the secreted. In terms of biological role, has antifungal activity against C.glabrata. The sequence is that of Antimicrobial peptide Alo-2 from Acrocinus longimanus (Giant harlequin beetle).